A 707-amino-acid polypeptide reads, in one-letter code: Mitochondrial disaggregase (707 aa).

Residues 1–36 (MLGSLVLRRKALAPRLLLRLLRSPTLRGHGGASGRN) constitute a mitochondrion transit peptide. Positions 92–126 (PGPEETLPGQDSWNGVPSRAGLGMCALAAALVVHC) are autoinhibitory. ANK repeat units follow at residues 133–162 (NKDA…DVNA), 166–195 (LGWT…DPNL), 265–295 (KGCT…PLQR), and 298–327 (MGHT…EKQR). His346, Ile348, Ser383, Gly384, Ile385, Gly386, Lys387, Thr388, Glu455, and Asn496 together coordinate ATP. The regulatory; slows ATPase and disaggregase activities stretch occupies residues 507 to 535 (LQLRQEALEMSRNRIAENLGDVQISDKIT). An ATP-binding site is contributed by Arg561. At Lys589 the chain carries N6-acetyllysine. Arg620 serves as a coordination point for ATP.

The protein belongs to the ClpA/ClpB family. In terms of assembly, homododecamer when substrate-bound; the homododecamer consists of 2 homohexamers stacked head-to-head via ANK repeat-mediated interactions. The active substrate-bound form is likely to exist in a dynamic equilibrium between homohexamers and homododecamers. Homotetradecamer in the unbound state which is remodeled upon substrate binding into the homododecamer. Interacts with PHB and PHB2. Interacts with MAVS; the interaction is enhanced by Sendai virus infection. Post-translationally, proteolytically cleaved by protease PARL. ATP-dependent protein disaggregase activity is stimulated by PARL-mediated cleavage of the N-terminal autoinhibitory peptide. In terms of tissue distribution, widely expressed (at protein level). Expressed in fetal, as well as in adult tissues, with highest levels in adult brain, including thalamus, hippocampus, occipital cortex and parietal cortex. Low expression in granulocytes.

It localises to the mitochondrion intermembrane space. The catalysed reaction is ATP + H2O = ADP + phosphate + H(+). Disaggregase activity is inhibited by ADP. Its function is as follows. Functions as a regulatory ATPase and participates in secretion/protein trafficking process. Has ATP-dependent protein disaggregase activity and is required to maintain the solubility of key mitochondrial proteins. Involved in mitochondrial-mediated antiviral innate immunity, activates RIG-I-mediated signal transduction and production of IFNB1 and pro-inflammatory cytokine IL6. Plays a role in granulocyte differentiation. This chain is Mitochondrial disaggregase, found in Homo sapiens (Human).